The chain runs to 308 residues: uncharacterized protein (308 aa).

This is an uncharacterized protein from Mycoplasmoides gallisepticum (strain R(low / passage 15 / clone 2)) (Mycoplasma gallisepticum).